The primary structure comprises 178 residues: Interleukin-10 (178 aa).

The first 18 residues, 1 to 18, serve as a signal peptide directing secretion; sequence MPNPVLLYCLVLLAGMGT. Disulfide bonds link C30–C126 and C80–C132. Residue N134 is glycosylated (N-linked (GlcNAc...) asparagine).

Belongs to the IL-10 family. Homodimer. Interacts with IL10RA and IL10RB.

It localises to the secreted. Its function is as follows. Major immune regulatory cytokine that acts on many cells of the immune system where it has profound anti-inflammatory functions, limiting excessive tissue disruption caused by inflammation. Mechanistically, IL10 binds to its heterotetrameric receptor comprising IL10RA and IL10RB leading to JAK1 and STAT2-mediated phosphorylation of STAT3. In turn, STAT3 translocates to the nucleus where it drives expression of anti-inflammatory mediators. Targets antigen-presenting cells (APCs) such as macrophages and monocytes and inhibits their release of pro-inflammatory cytokines including granulocyte-macrophage colony-stimulating factor /GM-CSF, granulocyte colony-stimulating factor/G-CSF, IL-1 alpha, IL-1 beta, IL-6, IL-8 and TNF-alpha. Also interferes with antigen presentation by reducing the expression of MHC-class II and co-stimulatory molecules, thereby inhibiting their ability to induce T cell activation. In addition, controls the inflammatory response of macrophages by reprogramming essential metabolic pathways including mTOR signaling. This Marmota monax (Woodchuck) protein is Interleukin-10 (IL10).